We begin with the raw amino-acid sequence, 520 residues long: Endosomal/lysosomal proton channel TMEM175 (520 aa).

Positions 1–27 (MGENDESEIIEHHDDEEMEKRRPPRTH) are disordered. Over 1–49 (MGENDESEIIEHHDDEEMEKRRPPRTHAQSFLESVASSVKEGHSSTQSS) the chain is Cytoplasmic. Positions 9-21 (IIEHHDDEEMEKR) are enriched in basic and acidic residues. The chain crosses the membrane as a helical span at residues 50–72 (HRLLAYSDALISIIATVMILPVA). The short motif at 51–57 (RLLAYSD) is the RxxxFSD motif 1 element. At 73-93 (HTKIQEDEELKQSIQALLTTK) the chain is on the lumenal side. Positions 74-79 (TKIQED) are short helix H1-1. The interval 81-87 (ELKQSIQ) is short helix H2-1. The chain crosses the membrane as a helical span at residues 94–116 (IAVYLMTFLIVTVAWAAHIRLFQ). The Cytoplasmic segment spans residues 117–122 (VIERID). The helical transmembrane segment at 123–144 (DTLALLNLACMMLITFLPYTFS) threads the bilayer. Topologically, residues 145 to 154 (LMATFPNNIL) are lumenal. Residues 155 to 176 (GILLFCACVMVIGLIQALIVLY) form a helical membrane-spanning segment. The Cytoplasmic segment spans residues 177-200 (GFSHPFLLNDQIQMSENQAYYKQH). A run of 2 helical transmembrane segments spans residues 201–221 (ILKVIMRVPIMCLFASIFSFI) and 222–242 (FFQLSYVLLAIVIFLPYISQC). Residues 243-274 (LKWIRSKAIGGQTDESPDSMPFYTYHPSEPLS) lie on the Cytoplasmic side of the membrane. A helical membrane pass occupies residues 275 to 299 (KERVEAFSDGVFAIVATLLILDICE). A RxxxFSD motif 2 motif is present at residues 277-283 (RVEAFSD). Residues 300–326 (GNVPDPSVVKKKFDNSLIAALQEYGPE) are Lumenal-facing. The tract at residues 305 to 313 (PSVVKKKFD) is short helix H1-2. Positions 315 to 321 (SLIAALQ) are short helix H2-2. The helical transmembrane segment at 327 to 349 (YLAYFGSFVTVGLLWFVHHSLFL) threads the bilayer. Residues 350 to 355 (HVTKAT) lie on the Cytoplasmic side of the membrane. The chain crosses the membrane as a helical span at residues 356–377 (RLMGLFNTFSLAFVGGLPLAYQ). Topologically, residues 378-392 (LTHESPRGSRNELEA) are lumenal. A helical membrane pass occupies residues 393-413 (VQISCVIIFFASLFQLAIWVT). Residues 414 to 433 (ALFTERETLHPYVRYGGREH) lie on the Cytoplasmic side of the membrane. The chain crosses the membrane as a helical span at residues 434–457 (TFMLAKLSLYPCVALGTFFITCIL). Topologically, residues 458 to 459 (SR) are lumenal. Residues 460–486 (FSAPIFHMMEICIPFAFLLLRLLVRVA) form a helical membrane-spanning segment. Over 487-520 (LALLRWLFCSARNDLERIPVEEEESRLPINDIVT) the chain is Cytoplasmic.

This sequence belongs to the TMEM175 family. Homodimer.

It is found in the endosome membrane. Its subcellular location is the lysosome membrane. The enzyme catalyses H(+)(in) = H(+)(out). It catalyses the reaction K(+)(in) = K(+)(out). With respect to regulation, active at low pH (under pH 4.6): proton channel activity is activated by luminal side protons. Polyunsaturated fatty acids, such as arachidonic acid, also activate the channel activity. Proton-activated proton channel that catalyzes proton efflux from endosomes and lysosomes to maintain a steady-state pH. Activated at low pH (under pH 4.6) by luminal side protons: selectively mediates lysosomal proton release from lysosomes, eliciting a proton leak that balances V-ATPase activity to maintain pH homeostasis. Regulation of lumenal pH stability is required for autophagosome-lysosome fusion. Also acts as a potassium channel at higher pH, regulating potassium conductance in endosomes and lysosomes. The polypeptide is Endosomal/lysosomal proton channel TMEM175 (Danio rerio (Zebrafish)).